Reading from the N-terminus, the 265-residue chain is Tryptophan synthase alpha chain (265 aa).

Residues E49 and E60 each act as proton acceptor in the active site.

This sequence belongs to the TrpA family. In terms of assembly, tetramer of two alpha and two beta chains.

It catalyses the reaction (1S,2R)-1-C-(indol-3-yl)glycerol 3-phosphate + L-serine = D-glyceraldehyde 3-phosphate + L-tryptophan + H2O. It functions in the pathway amino-acid biosynthesis; L-tryptophan biosynthesis; L-tryptophan from chorismate: step 5/5. The alpha subunit is responsible for the aldol cleavage of indoleglycerol phosphate to indole and glyceraldehyde 3-phosphate. This is Tryptophan synthase alpha chain from Janthinobacterium sp. (strain Marseille) (Minibacterium massiliensis).